A 335-amino-acid chain; its full sequence is Fructose-1,6-bisphosphatase class 1 (335 aa).

Residues Glu-90, Asp-112, Leu-114, and Asp-115 each contribute to the Mg(2+) site. Residues 115–118 (DGSS), Asn-210, and Lys-276 contribute to the substrate site. Glu-282 provides a ligand contact to Mg(2+).

The protein belongs to the FBPase class 1 family. In terms of assembly, homotetramer. Mg(2+) serves as cofactor.

It localises to the cytoplasm. The catalysed reaction is beta-D-fructose 1,6-bisphosphate + H2O = beta-D-fructose 6-phosphate + phosphate. It functions in the pathway carbohydrate biosynthesis; gluconeogenesis. The sequence is that of Fructose-1,6-bisphosphatase class 1 from Ectopseudomonas mendocina (strain ymp) (Pseudomonas mendocina).